The following is a 97-amino-acid chain: UPF0729 protein AAEL015238 (97 aa).

The interval 69-97 (EVAASGSGSNGTATAVGSEGEAEETKKSQ) is disordered. Over residues 74 to 83 (GSGSNGTATA) the composition is skewed to polar residues.

Belongs to the UPF0729 family.

The protein is UPF0729 protein AAEL015238 of Aedes aegypti (Yellowfever mosquito).